The sequence spans 343 residues: D-erythrose-4-phosphate dehydrogenase (343 aa).

Position 12–13 (12–13) interacts with NAD(+); that stretch reads RI. Residues 154–156, Arg-200, 213–214, and Arg-236 contribute to the substrate site; these read SCT and TK. Residue Cys-155 is the Nucleophile of the active site. Asn-318 contributes to the NAD(+) binding site.

This sequence belongs to the glyceraldehyde-3-phosphate dehydrogenase family. Epd subfamily. In terms of assembly, homotetramer.

It is found in the cytoplasm. The enzyme catalyses D-erythrose 4-phosphate + NAD(+) + H2O = 4-phospho-D-erythronate + NADH + 2 H(+). The protein operates within cofactor biosynthesis; pyridoxine 5'-phosphate biosynthesis; pyridoxine 5'-phosphate from D-erythrose 4-phosphate: step 1/5. Catalyzes the NAD-dependent conversion of D-erythrose 4-phosphate to 4-phosphoerythronate. The protein is D-erythrose-4-phosphate dehydrogenase of Pseudoalteromonas translucida (strain TAC 125).